The chain runs to 274 residues: MDRKIVVLDINTANFFNTTKDLEVWKNFFNFIQANNHQLVFMSSCWQQAVLYLLDLLSLDDVDIIAESGAIIWISKTNEFIYQSFLDSVSIDTIVHHAIITNSGVFAIGKSKISEEPNTTINYFISLEKYKQFKLIWLTEFDQTLKYQNFLKNLSEMDVSSIYVFSPQYHLDFQLMEHISSGQPKFHYSNFYNENFLFTSTKNSKFSALETYVKSKNCSLKDVHYLNVTEVPINNINQLASVVFLSKKQPDNDEEFNNPEISIVLKGICEQLMK.

104 to 111 serves as a coordination point for ATP; it reads GVFAIGKS.

This is an uncharacterized protein from Mycoplasma genitalium (strain ATCC 33530 / DSM 19775 / NCTC 10195 / G37) (Mycoplasmoides genitalium).